The sequence spans 304 residues: Dihydroorotate dehydrogenase B (NAD(+)), catalytic subunit (304 aa).

FMN-binding positions include Ser-21 and 45 to 46 (KA). Substrate is bound by residues Lys-45 and 69 to 73 (NAIGL). The FMN site is built by Asn-99 and Asn-127. Asn-127 provides a ligand contact to substrate. Cys-130 acts as the Nucleophile in catalysis. The FMN site is built by Lys-165 and Ile-191. 192-193 (NT) provides a ligand contact to substrate. Residues Gly-217, 243 to 244 (GG), and 265 to 266 (GT) contribute to the FMN site.

Belongs to the dihydroorotate dehydrogenase family. Type 1 subfamily. Heterotetramer of 2 PyrK and 2 PyrD type B subunits. Requires FMN as cofactor.

The protein localises to the cytoplasm. It carries out the reaction (S)-dihydroorotate + NAD(+) = orotate + NADH + H(+). Its pathway is pyrimidine metabolism; UMP biosynthesis via de novo pathway; orotate from (S)-dihydroorotate (NAD(+) route): step 1/1. In terms of biological role, catalyzes the conversion of dihydroorotate to orotate with NAD(+) as electron acceptor. In Listeria monocytogenes serotype 4b (strain CLIP80459), this protein is Dihydroorotate dehydrogenase B (NAD(+)), catalytic subunit (pyrD).